An 82-amino-acid polypeptide reads, in one-letter code: Small ribosomal subunit protein bS16 (82 aa).

Belongs to the bacterial ribosomal protein bS16 family.

The chain is Small ribosomal subunit protein bS16 from Psychromonas ingrahamii (strain DSM 17664 / CCUG 51855 / 37).